The chain runs to 1047 residues: Atrial natriuretic peptide receptor 2 (1047 aa).

Positions 1-16 (MALPSLLLVVAALAGG) are cleaved as a signal peptide. At 17-458 (VRPPGARNLT…DKTPLSTLAI (442 aa)) the chain is on the extracellular side. N-linked (GlcNAc...) asparagine glycans are attached at residues N24 and N35. C75 and C101 are oxidised to a cystine. N-linked (GlcNAc...) asparagine glycans are attached at residues N161, N195, N244, N277, and N349. Residues 459–478 (VALGTGVTFIMFGVSSFLIF) traverse the membrane as a helical segment. The Cytoplasmic segment spans residues 479-1047 (RKLMLEKELA…GEQKGPPGLL (569 aa)). S513 is modified (phosphoserine). A Protein kinase domain is found at 513–786 (SRLTLSLRGS…PDFGQIKGFI (274 aa)). T516 carries the post-translational modification Phosphothreonine. Phosphoserine occurs at positions 518, 522, 523, and 526. A Phosphothreonine modification is found at T529. Positions 861–991 (TIYFSDIVGF…DTVNTASRME (131 aa)) constitute a Guanylate cyclase domain.

Belongs to the adenylyl cyclase class-4/guanylyl cyclase family. In terms of processing, phosphorylated. Phosphorylation of the protein kinase-like domain is required for full activation by CNP. Glycosylated. Widely expressed. Expressed in the columnar proliferating and prehypertrophic chondrocyte layers of the tibia.

It is found in the cell membrane. The catalysed reaction is GTP = 3',5'-cyclic GMP + diphosphate. Functionally, receptor for the C-type natriuretic peptide NPPC/CNP hormone. Has guanylate cyclase activity upon binding of its ligand. May play a role in the regulation of skeletal growth. The sequence is that of Atrial natriuretic peptide receptor 2 (Npr2) from Mus musculus (Mouse).